Here is a 962-residue protein sequence, read N- to C-terminus: Protease 3 (962 aa).

Positions 1-23 (MPRSTWFKALLLLVALWAPLSQA) are cleaved as a signal peptide. His-88 lines the Zn(2+) pocket. The active-site Proton acceptor is the Glu-91. His-92 and Glu-169 together coordinate Zn(2+).

It belongs to the peptidase M16 family. As to quaternary structure, monomer. The cofactor is Zn(2+).

The protein localises to the periplasm. It catalyses the reaction Preferential cleavage of 16-Tyr-|-Leu-17 and 25-Phe-|-Tyr-26 bonds of oxidized insulin B chain. Also acts on other substrates of Mw less than 7 kDa such as insulin and glucagon.. In terms of biological role, endopeptidase that degrades small peptides of less than 7 kDa, such as glucagon and insulin. The protein is Protease 3 (ptrA) of Escherichia coli O157:H7.